Reading from the N-terminus, the 452-residue chain is MNSGILQVFQRALTCPICMNYFLDPVTIDCGHSFCRPCLYLNWQDTAVLAQCSECKKTTRQRNLNTDICLKNMAFIARKASLRQFLSSEEQICGMHRETKKMFCEVDKSLLCLPCSNSQEHRNHIHCPIEWAAEERREELLKKMQSLWEKACENLRNLNMETTRTRCWKDYVSLRIEAIRAEYQKMPAFLHEEEQHHLERLRKEGEDIFQQLNESKARMEHSRELLRGMYEDLKQMCHKADVELLQAFGDILHRYESLLLQVSEPVNPELSAGPITGLLDSLSGFRVDFTLQPERANSHIFLCGDLRSMNVGCDPQDDPDITGKSECFLVWGAQAFTSGKYYWEVHMGDSWNWAFGVCNNYWKEKRQNDKIDGEEGLFLLGCVKEDTHCSLFTTSPLVVQYVPRPTSTVGLFLDCEGRTVSFVDVDQSSLIYTIPNCSFSPPLRPIFCCSHF.

The RING-type zinc-finger motif lies at 15-56 (CPICMNYFLDPVTIDCGHSFCRPCLYLNWQDTAVLAQCSECK). Residues 88-129 (SEEQICGMHRETKKMFCEVDKSLLCLPCSNSQEHRNHIHCPI) form a B box-type zinc finger. Zn(2+) contacts are provided by C93, H96, C115, and H121. In terms of domain architecture, B30.2/SPRY spans 269–452 (ELSAGPITGL…LRPIFCCSHF (184 aa)).

It belongs to the TRIM/RBCC family.

The sequence is that of Tripartite motif-containing protein 51 (TRIM51) from Homo sapiens (Human).